The following is a 111-amino-acid chain: Large ribosomal subunit protein P1 (111 aa).

Positions 84-111 (PAEAAAAEEKKEEEKEESDEDMGFGLFD) are disordered.

This sequence belongs to the eukaryotic ribosomal protein P1/P2 family. In terms of assembly, P1 and P2 exist as dimers at the large ribosomal subunit. In terms of processing, phosphorylated.

Its function is as follows. Plays an important role in the elongation step of protein synthesis. The polypeptide is Large ribosomal subunit protein P1 (Aspergillus fumigatus (strain ATCC MYA-4609 / CBS 101355 / FGSC A1100 / Af293) (Neosartorya fumigata)).